The primary structure comprises 212 residues: Redox-sensing transcriptional repressor Rex (212 aa).

The segment at residues 17–56 (KYHRYLQELMENDIDRISSKELSEKIGFTASQIRQDLNCF) is a DNA-binding region (H-T-H motif). 91–96 (GAGNIG) is an NAD(+) binding site.

Belongs to the transcriptional regulatory Rex family. As to quaternary structure, homodimer.

It localises to the cytoplasm. Functionally, modulates transcription in response to changes in cellular NADH/NAD(+) redox state. This is Redox-sensing transcriptional repressor Rex from Clostridium perfringens (strain SM101 / Type A).